The chain runs to 629 residues: DNA mismatch repair protein MutL (629 aa).

This sequence belongs to the DNA mismatch repair MutL/HexB family.

Functionally, this protein is involved in the repair of mismatches in DNA. It is required for dam-dependent methyl-directed DNA mismatch repair. May act as a 'molecular matchmaker', a protein that promotes the formation of a stable complex between two or more DNA-binding proteins in an ATP-dependent manner without itself being part of a final effector complex. The sequence is that of DNA mismatch repair protein MutL from Haemophilus influenzae (strain 86-028NP).